We begin with the raw amino-acid sequence, 1262 residues long: Structural maintenance of chromosomes protein 1 (1262 aa).

Residues 171 to 497 (SRSHEFQAEY…VAVVRQLSEA (327 aa)) adopt a coiled-coil conformation. The region spanning 524–642 (SVYGRLVDLC…ESQEDAKQLA (119 aa)) is the SMC hinge domain. Residues 680 to 937 (KKWDEKVVKQ…RLESLLTKKQ (258 aa)) are a coiled coil. Residues 965–994 (EYEEDDGDDTASQSSQSATDGPSVSEEQIQ) are disordered. The span at 974–991 (TASQSSQSATDGPSVSEE) shows a compositional bias: polar residues. A coiled-coil region spans residues 1017 to 1086 (DGVRQMSNRL…QQFEKVKTDR (70 aa)). The DA-box signature appears at 1148–1183 (LSGGEKTIAALALLFAVHGRNPAPFFVLDEIDAALD).

This sequence belongs to the SMC family. SMC1 subfamily. In terms of assembly, component of the cohesin complex, composed of the smc-1 and smc-3 heterodimer attached via their SMC hinge domain, scc-1 which links them, and scc-3. Interacts with smc-3, scc-1, scc-3 and tim-1.

The protein localises to the nucleus. It localises to the chromosome. Involved in chromosome cohesion during cell cycle and in DNA repair. Required for chromosome segregation during mitosis. Central component of cohesin complex. The cohesin complex is required for the cohesion of sister chromatids after DNA replication. The cohesin complex apparently forms a large proteinaceous ring within which sister chromatids can be trapped. At anaphase, the complex is cleaved and dissociates from chromatin, allowing sister chromatids to segregate. The sequence is that of Structural maintenance of chromosomes protein 1 from Caenorhabditis elegans.